The chain runs to 56 residues: Chymotrypsin inhibitor (56 aa).

Disulfide bonds link cysteine 3-cysteine 36, cysteine 12-cysteine 32, cysteine 16-cysteine 28, cysteine 20-cysteine 56, and cysteine 38-cysteine 50. A TIL domain is found at 3 to 56; it reads CGPNEVFNTCGSACAPTCAQPKTRICTMQCRIGCQCQEGFLRNGEGACVLPENC.

It belongs to the serine protease inhibitor-like (TIL domain-containing) family.

It is found in the secreted. Its function is as follows. Chymotrypsin and cathepsin G inhibitor. The protein is Chymotrypsin inhibitor of Apis mellifera (Honeybee).